A 473-amino-acid polypeptide reads, in one-letter code: DNA (cytosine-5)-methyltransferase DRM1A (473 aa).

The region spanning 20-61 is the UBA 1 domain; that stretch reads SAPSALVAYFLGMGFSREMVFRAIKEIGDTDSEQILELLLTY. Residues 84-101 are compositionally biased toward acidic residues; it reads EEEDEEEDVNWDEDDTVD. The tract at residues 84-115 is disordered; the sequence is EEEDEEEDVNWDEDDTVDNFDRATYSDGSGDE. In terms of domain architecture, UBA 2 spans 120 to 140; the sequence is EMSEKDEKIKSLVSMGFPEDE. Residues 204-431 enclose the SAM-dependent MTase DRM-type domain; the sequence is VHRNLPDQAL…DSVKTIMASI (228 aa).

It belongs to the class I-like SAM-binding methyltransferase superfamily. DRM-methyltransferase family.

It is found in the nucleus. The enzyme catalyses a 2'-deoxycytidine in DNA + S-adenosyl-L-methionine = a 5-methyl-2'-deoxycytidine in DNA + S-adenosyl-L-homocysteine + H(+). In terms of biological role, involved in de novo DNA methylation. Involved in RNA-directed DNA methylation (RdDM). The chain is DNA (cytosine-5)-methyltransferase DRM1A from Oryza sativa subsp. japonica (Rice).